Reading from the N-terminus, the 67-residue chain is Small ribosomal subunit protein eS31 (67 aa).

Zn(2+) is bound by residues Cys35, Cys38, Cys54, and Cys57. The C4-type zinc-finger motif lies at 35 to 57 (CPRCGSIMAHHMKPLERWACGKC).

The protein belongs to the eukaryotic ribosomal protein eS31 family. As to quaternary structure, part of the 30S ribosomal subunit. Zn(2+) serves as cofactor.

The sequence is that of Small ribosomal subunit protein eS31 from Sulfolobus acidocaldarius (strain ATCC 33909 / DSM 639 / JCM 8929 / NBRC 15157 / NCIMB 11770).